The chain runs to 337 residues: Anthranilate phosphoribosyltransferase (337 aa).

5-phospho-alpha-D-ribose 1-diphosphate-binding positions include Gly-82, 85–86 (GD), Thr-90, 92–95 (NIST), 110–118 (KHGGRSVSS), and Ser-122. An anthranilate-binding site is contributed by Gly-82. Residue Ser-94 coordinates Mg(2+). Residue Arg-168 participates in anthranilate binding. Positions 226 and 227 each coordinate Mg(2+).

It belongs to the anthranilate phosphoribosyltransferase family. In terms of assembly, homodimer. It depends on Mg(2+) as a cofactor.

The enzyme catalyses N-(5-phospho-beta-D-ribosyl)anthranilate + diphosphate = 5-phospho-alpha-D-ribose 1-diphosphate + anthranilate. It participates in amino-acid biosynthesis; L-tryptophan biosynthesis; L-tryptophan from chorismate: step 2/5. Catalyzes the transfer of the phosphoribosyl group of 5-phosphorylribose-1-pyrophosphate (PRPP) to anthranilate to yield N-(5'-phosphoribosyl)-anthranilate (PRA). In Francisella tularensis subsp. holarctica (strain OSU18), this protein is Anthranilate phosphoribosyltransferase.